Here is a 253-residue protein sequence, read N- to C-terminus: Uracil-DNA glycosylase (253 aa).

Residue aspartate 79 is the Proton acceptor of the active site.

The protein belongs to the uracil-DNA glycosylase (UDG) superfamily. UNG family.

It is found in the cytoplasm. The enzyme catalyses Hydrolyzes single-stranded DNA or mismatched double-stranded DNA and polynucleotides, releasing free uracil.. Excises uracil residues from the DNA which can arise as a result of misincorporation of dUMP residues by DNA polymerase or due to deamination of cytosine. This is Uracil-DNA glycosylase from Xylella fastidiosa (strain 9a5c).